The chain runs to 75 residues: MKLLLFTALVLVVISLIEVEAENERACIPLEKECTKTPGNCCSGLKCDCYRRFEQGVAKGIQCWCIEKDVTYKGV.

The first 21 residues, 1-21 (MKLLLFTALVLVVISLIEVEA), serve as a signal peptide directing secretion. Positions 22–25 (ENER) are excised as a propeptide.

Belongs to the neurotoxin 19 (CSTX) family. 06 (U6-Lctx) subfamily. Post-translationally, contains 4 disulfide bonds. In terms of tissue distribution, expressed by the venom gland.

The protein resides in the secreted. The protein is U6-lycotoxin-Ls1d of Lycosa singoriensis (Wolf spider).